Reading from the N-terminus, the 359-residue chain is Mannose-1-phosphate guanylyltransferase (359 aa).

Belongs to the transferase hexapeptide repeat family.

The enzyme catalyses alpha-D-mannose 1-phosphate + GTP + H(+) = GDP-alpha-D-mannose + diphosphate. It participates in cell wall biogenesis. It functions in the pathway nucleotide-sugar biosynthesis; GDP-alpha-D-mannose biosynthesis; GDP-alpha-D-mannose from alpha-D-mannose 1-phosphate (GTP route): step 1/1. Catalyzes the formation of GDP-mannose from D-mannose-1-phosphate and GTP. Plays an important role in the synthesis of different glycoconjugates which are responsible for cell wall structure, virulence and immunomodulatory activity of M.tuberculosis. The sequence is that of Mannose-1-phosphate guanylyltransferase from Mycobacterium tuberculosis (strain ATCC 25618 / H37Rv).